A 293-amino-acid polypeptide reads, in one-letter code: 33 kDa chaperonin (293 aa).

2 cysteine pairs are disulfide-bonded: Cys-229/Cys-231 and Cys-262/Cys-265.

Belongs to the HSP33 family. Under oxidizing conditions two disulfide bonds are formed involving the reactive cysteines. Under reducing conditions zinc is bound to the reactive cysteines and the protein is inactive.

The protein resides in the cytoplasm. Redox regulated molecular chaperone. Protects both thermally unfolding and oxidatively damaged proteins from irreversible aggregation. Plays an important role in the bacterial defense system toward oxidative stress. This is 33 kDa chaperonin from Methylobacillus flagellatus (strain ATCC 51484 / DSM 6875 / VKM B-1610 / KT).